The chain runs to 272 residues: MPALDEIKSSWADEVELDSGSLPPPTEIIENGQKIVTEYKYNKDDKKVKVVRTYKITRLVVPKSIAMRKNWSKFGDSSNDKPGPNPQTTMVSEDVYMQFVSNKEEEQKSDNALDSLKNIAKCRICEGEHWSLSCPYKGTAYEAGKAKPVVPVQQEMAPTTAKSGKYVPPSMRDSQKPGMGGNPRGRDDTTAIRISNLSEAMTEADLEELVKKIGPHSKMFLARDKNTGLCKGFAYVHFKSRRDAATAIELLNGHGYDHLILNVEWSKPQNPQ.

2 disordered regions span residues 1-28 and 157-188; these read MPALDEIKSSWADEVELDSGSLPPPTEI and APTTAKSGKYVPPSMRDSQKPGMGGNPRGRDD. The RRM domain maps to 190 to 268; that stretch reads TAIRISNLSE…LILNVEWSKP (79 aa).

The protein belongs to the eIF-3 subunit G family. Component of the eukaryotic translation initiation factor 3 (eIF-3) complex.

Its subcellular location is the cytoplasm. Functionally, RNA-binding component of the eukaryotic translation initiation factor 3 (eIF-3) complex, which is involved in protein synthesis of a specialized repertoire of mRNAs and, together with other initiation factors, stimulates binding of mRNA and methionyl-tRNAi to the 40S ribosome. The eIF-3 complex specifically targets and initiates translation of a subset of mRNAs involved in cell proliferation. This subunit can bind 18S rRNA. The polypeptide is Eukaryotic translation initiation factor 3 subunit G (Aedes aegypti (Yellowfever mosquito)).